The sequence spans 192 residues: Signal peptidase complex catalytic subunit SEC11C (192 aa).

Residues 1 to 28 lie on the Cytoplasmic side of the membrane; that stretch reads MVRAGAVGTHLPTSSLDIFGDLRKMNKR. Residues 29–48 form a helical; Signal-anchor for type II membrane protein membrane-spanning segment; sequence QLYYQVLNFAMIVSSALMIW. The Lumenal portion of the chain corresponds to 49–192; it reads KGLIVLTGSE…GAYVLLKRES (144 aa). Active-site charge relay system residues include Ser-68, His-108, and Asp-134. The C-terminal short (CTS) helix stretch occupies residues 177 to 188; that stretch reads ALLAVMGAYVLL.

It belongs to the peptidase S26B family. Component of the signal peptidase complex paralog C (SPC-C) composed of a catalytic subunit SEC11C and three accessory subunits SPCS1, SPCS2 and SPCS3. Within the complex, interacts with SPCS2 and SPCS3. The complex induces a local thinning of the ER membrane which is used to measure the length of the signal peptide (SP) h-region of protein substrates. This ensures the selectivity of the complex towards h-regions shorter than 18-20 amino acids. In terms of processing, may undergo processing at the N-terminus.

The protein resides in the endoplasmic reticulum membrane. It catalyses the reaction Cleavage of hydrophobic, N-terminal signal or leader sequences from secreted and periplasmic proteins.. In terms of biological role, catalytic component of the signal peptidase complex (SPC) which catalyzes the cleavage of N-terminal signal sequences from nascent proteins as they are translocated into the lumen of the endoplasmic reticulum. Specifically cleaves N-terminal signal peptides that contain a hydrophobic alpha-helix (h-region) shorter than 18-20 amino acids. The protein is Signal peptidase complex catalytic subunit SEC11C (Sec11c) of Mus musculus (Mouse).